A 513-amino-acid chain; its full sequence is Tyrosine-protein phosphatase non-receptor type substrate 1 (513 aa).

An N-terminal signal peptide occupies residues 1-31 (MEPAGPAPGRLGPLLLCLLLSASCFCTGATG). The region spanning 32-137 (KELKVTQPEK…SSEPDTEIQS (106 aa)) is the Ig-like V-type domain. Topologically, residues 32-373 (KELKVTQPEK…PDNNATHNWN (342 aa)) are extracellular. N-linked (GlcNAc...) asparagine glycans are attached at residues Asn-54, Asn-92, Asn-168, Asn-180, Asn-205, Asn-209, Asn-246, Asn-271, Asn-293, Asn-302, Asn-312, Asn-320, Asn-345, and Asn-367. Cys-55 and Cys-121 are joined by a disulfide. Ig-like C1-type domains lie at 149–248 (PSPP…ANLS) and 255–343 (PTVK…PAIT). Cys-171 and Cys-229 are disulfide-bonded. Residues Cys-274 and Cys-332 are joined by a disulfide bond. A helical membrane pass occupies residues 374–394 (VFIGVGVACALLVVLLMAALY). The Cytoplasmic segment spans residues 395–511 (LLRIKQKKAK…FSEYASVQVQ (117 aa)). Position 440 is a phosphotyrosine; by Tyr-kinases (Tyr-440). Residues 440–443 (YADL) carry the SH2-binding motif. The segment at 444-513 (NLPKEKKPAP…EYASVQVQRK (70 aa)) is disordered. The SH3-binding signature appears at 450–455 (KPAPRA). Phosphotyrosine; by Tyr-kinases is present on residues Tyr-464, Tyr-481, and Tyr-505. Short sequence motifs (SH2-binding) lie at residues 464-467 (YASI), 481-484 (YADL), and 505-508 (YASV). Polar residues predominate over residues 504–513 (EYASVQVQRK).

As to quaternary structure, binds PTPN11 when tyrosine-phosphorylated, except in macrophages, where it primarily binds PTPN6. Binds GRB2 vitro. Binds FGR. Binds JAK2 irrespective of its phosphorylation status and forms a stable complex. Binds SCAP1 and/or SCAP2. The resulting complex recruits FYB1. Binds PTK2B. Interacts with TRIM2. In terms of processing, N-glycosylated. Phosphorylated on tyrosine residues. As to expression, highly expressed in cerebral cortex, brain, spinal cord, cerebellum and spleen, and at much lower levels in kidney, thymus, heart, lung and liver. Within the cerebellum, highly expressed throughout the molecular layer, and in synaptic glomeruli in the granule cell layer. Detected in neurons of the hippocampus and dentate gyrus, and in olfactory bulb. Not detected in Purkinje cells. Highly expressed in the plexiform layers, optic fiber layer and the outer segments of the photoreceptor layer in the retina. Highly expressed in macrophages. Isoform 3 is detected at very low levels in all tissues tested.

It localises to the membrane. Its function is as follows. Immunoglobulin-like cell surface receptor for CD47. Acts as a docking protein and induces translocation of PTPN6, PTPN11 and other binding partners from the cytosol to the plasma membrane. Supports adhesion of cerebellar neurons, neurite outgrowth and glial cell attachment. May play a key role in intracellular signaling during synaptogenesis and in synaptic function. Involved in the negative regulation of receptor tyrosine kinase-coupled cellular responses induced by cell adhesion, growth factors or insulin. Mediates negative regulation of phagocytosis, mast cell activation and dendritic cell activation. CD47 binding prevents maturation of immature dendritic cells and inhibits cytokine production by mature dendritic cells. Plays a role in antiviral immunity and limits new world arenavirus infection by decreasing virus internalization. Receptor for THBS1. Interaction with THBS1 stimulates phosphorylation of SIRPA. In response to THBS1, involved in ROS signaling in non-phagocytic cells, stimulating NADPH oxidase-derived ROS production. This chain is Tyrosine-protein phosphatase non-receptor type substrate 1 (Sirpa), found in Mus musculus (Mouse).